The following is a 215-amino-acid chain: UPF0502 protein YceH (215 aa).

Lys80 carries the N6-acetyllysine modification.

This sequence belongs to the UPF0502 family.

This is UPF0502 protein YceH from Shigella boydii serotype 18 (strain CDC 3083-94 / BS512).